We begin with the raw amino-acid sequence, 196 residues long: Elongation factor Ts (196 aa).

The tract at residues 80–83 is involved in Mg(2+) ion dislocation from EF-Tu; it reads TDFV.

This sequence belongs to the EF-Ts family. In terms of assembly, heterotetramer composed of two EF-Ts.EF-Tu dimer complexes.

The protein resides in the cytoplasm. Its function is as follows. Associates with the EF-Tu.GDP complex and induces the exchange of GDP to GTP. It remains bound to the aminoacyl-tRNA.EF-Tu.GTP complex up to the GTP hydrolysis stage on the ribosome. This Thermus thermophilus (strain ATCC 27634 / DSM 579 / HB8) protein is Elongation factor Ts (tsf).